The primary structure comprises 430 residues: UDP-N-acetylglucosamine 1-carboxyvinyltransferase 1 (430 aa).

22 to 23 (KN) is a binding site for phosphoenolpyruvate. Arg-93 provides a ligand contact to UDP-N-acetyl-alpha-D-glucosamine. Cys-117 acts as the Proton donor in catalysis. A 2-(S-cysteinyl)pyruvic acid O-phosphothioketal modification is found at Cys-117. UDP-N-acetyl-alpha-D-glucosamine-binding positions include 122-126 (RPVDL), Asp-305, and Val-327.

The protein belongs to the EPSP synthase family. MurA subfamily.

It is found in the cytoplasm. The enzyme catalyses phosphoenolpyruvate + UDP-N-acetyl-alpha-D-glucosamine = UDP-N-acetyl-3-O-(1-carboxyvinyl)-alpha-D-glucosamine + phosphate. Its pathway is cell wall biogenesis; peptidoglycan biosynthesis. Its function is as follows. Cell wall formation. Adds enolpyruvyl to UDP-N-acetylglucosamine. The chain is UDP-N-acetylglucosamine 1-carboxyvinyltransferase 1 from Listeria monocytogenes serotype 4b (strain F2365).